Reading from the N-terminus, the 396-residue chain is Elongation factor Tu (396 aa).

Positions Lys10 to Glu205 constitute a tr-type G domain. The interval Gly19–Thr26 is G1. Gly19–Thr26 contributes to the GTP binding site. Thr26 contacts Mg(2+). Residues Gly61–Ser65 form a G2 region. The interval Asp82 to Gly85 is G3. Residues Asp82 to His86 and Asn137 to Asp140 each bind GTP. The G4 stretch occupies residues Asn137–Asp140. The segment at Ser175–Leu177 is G5.

It belongs to the TRAFAC class translation factor GTPase superfamily. Classic translation factor GTPase family. EF-Tu/EF-1A subfamily. As to quaternary structure, monomer.

The protein localises to the cytoplasm. It catalyses the reaction GTP + H2O = GDP + phosphate + H(+). In terms of biological role, GTP hydrolase that promotes the GTP-dependent binding of aminoacyl-tRNA to the A-site of ribosomes during protein biosynthesis. The sequence is that of Elongation factor Tu from Shouchella clausii (strain KSM-K16) (Alkalihalobacillus clausii).